The primary structure comprises 197 residues: Glycerol-3-phosphate acyltransferase (197 aa).

5 helical membrane-spanning segments follow: residues 7–27 (TLLP…LILT), 55–75 (GLAA…VLIV), 78–98 (VWPG…CFPV), 116–136 (LALA…VLFL), and 157–177 (VLGY…VLYL).

It belongs to the PlsY family. As to quaternary structure, probably interacts with PlsX.

Its subcellular location is the cell inner membrane. It catalyses the reaction an acyl phosphate + sn-glycerol 3-phosphate = a 1-acyl-sn-glycero-3-phosphate + phosphate. Its pathway is lipid metabolism; phospholipid metabolism. Functionally, catalyzes the transfer of an acyl group from acyl-phosphate (acyl-PO(4)) to glycerol-3-phosphate (G3P) to form lysophosphatidic acid (LPA). This enzyme utilizes acyl-phosphate as fatty acyl donor, but not acyl-CoA or acyl-ACP. This chain is Glycerol-3-phosphate acyltransferase, found in Novosphingobium aromaticivorans (strain ATCC 700278 / DSM 12444 / CCUG 56034 / CIP 105152 / NBRC 16084 / F199).